The primary structure comprises 330 residues: DNA-directed RNA polymerase subunit alpha (330 aa).

The segment at 1 to 229 is alpha N-terminal domain (alpha-NTD); that stretch reads MKNIKFIKPF…DHFNVLVELS (229 aa). Positions 245 to 330 are alpha C-terminal domain (alpha-CTD); that stretch reads AHNSVLDLEI…HSVEEDKDKH (86 aa).

It belongs to the RNA polymerase alpha chain family. Homodimer. The RNAP catalytic core consists of 2 alpha, 1 beta, 1 beta' and 1 omega subunit. When a sigma factor is associated with the core the holoenzyme is formed, which can initiate transcription.

The catalysed reaction is RNA(n) + a ribonucleoside 5'-triphosphate = RNA(n+1) + diphosphate. DNA-dependent RNA polymerase catalyzes the transcription of DNA into RNA using the four ribonucleoside triphosphates as substrates. The polypeptide is DNA-directed RNA polymerase subunit alpha (Onion yellows phytoplasma (strain OY-M)).